The chain runs to 130 residues: MARVKRAVNAHKKRRVILERAAGYRGQRSRLYRKAKEQVTHSLVYAYRDRRAKKGEFRRLWIQRINAAARANGLTYNRLIQGLSLAGVQVDRRILAELAVHEPATFASLVQTAKAALPANTSAPKVAANA.

It belongs to the bacterial ribosomal protein bL20 family.

Its function is as follows. Binds directly to 23S ribosomal RNA and is necessary for the in vitro assembly process of the 50S ribosomal subunit. It is not involved in the protein synthesizing functions of that subunit. The polypeptide is Large ribosomal subunit protein bL20 (Clavibacter michiganensis subsp. michiganensis (strain NCPPB 382)).